The sequence spans 388 residues: Chorismate synthase (388 aa).

Positions 39 and 45 each coordinate NADP(+). FMN contacts are provided by residues 130–132 (RSS), 251–252 (NA), G296, 311–315 (KPIPT), and R337.

This sequence belongs to the chorismate synthase family. In terms of assembly, homotetramer. FMNH2 is required as a cofactor.

It catalyses the reaction 5-O-(1-carboxyvinyl)-3-phosphoshikimate = chorismate + phosphate. Its pathway is metabolic intermediate biosynthesis; chorismate biosynthesis; chorismate from D-erythrose 4-phosphate and phosphoenolpyruvate: step 7/7. Functionally, catalyzes the anti-1,4-elimination of the C-3 phosphate and the C-6 proR hydrogen from 5-enolpyruvylshikimate-3-phosphate (EPSP) to yield chorismate, which is the branch point compound that serves as the starting substrate for the three terminal pathways of aromatic amino acid biosynthesis. This reaction introduces a second double bond into the aromatic ring system. This Geobacillus sp. (strain WCH70) protein is Chorismate synthase.